A 293-amino-acid polypeptide reads, in one-letter code: MEITFQKVEHRYQHKTPFERRALYDVDVSFPSGGYYAIIGHTGSGKSTMIQHLNGLLQPTNGTVQIGEHFISAGKKEKKLKPLRKKVGVVFQFPEHQLFEETVEKDICFGPTNFGVSVEEAKQKAREAIELVGLEPELLARSPFELSGGQMRRVAIAGVLAMEPEVLVLDEPTAGLDPKGQNELMEMFYKLHKEKGLTVILVTHNMEDAAKYAEQIVVMHKGTVFLQGSAEEVFSHADELEKIGVDLPMSLKYKRAIEEKFGISIPKATLSLEDLTHEVVQVLRKGGHESCSS.

The ABC transporter domain occupies 3 to 246; sequence ITFQKVEHRY…ADELEKIGVD (244 aa). 40–47 provides a ligand contact to ATP; it reads GHTGSGKS.

This sequence belongs to the ABC transporter superfamily. Energy-coupling factor EcfA family. In terms of assembly, forms a stable energy-coupling factor (ECF) transporter complex composed of 2 membrane-embedded substrate-binding proteins (S component), 2 ATP-binding proteins (A component) and 2 transmembrane proteins (T component).

The protein resides in the cell membrane. Its function is as follows. ATP-binding (A) component of a common energy-coupling factor (ECF) ABC-transporter complex. Unlike classic ABC transporters this ECF transporter provides the energy necessary to transport a number of different substrates. The sequence is that of Energy-coupling factor transporter ATP-binding protein EcfA2 from Bacillus cereus (strain ATCC 10987 / NRS 248).